A 312-amino-acid chain; its full sequence is Bark storage protein A (312 aa).

Residues 1 to 24 (MPQQSMQASLIDPIAEIERSNCKI) form the signal peptide. The N-linked (GlcNAc...) asparagine glycan is linked to asparagine 70.

It to wound-inducible poplar endochitinases. In terms of assembly, monomer. In terms of tissue distribution, bark.

In terms of biological role, may play a role in nitrogen storage. The polypeptide is Bark storage protein A (BSPA) (Populus deltoides (Eastern poplar)).